Consider the following 612-residue polypeptide: Transcription factor ffsR (612 aa).

A compositionally biased stretch (polar residues) spans 1–12 (MDTLTAPTTQSE). Positions 1–21 (MDTLTAPTTQSEQPPPPLTAS) are disordered. The segment at residues 28–60 (CDRCRSHKLRCNRDLMTSTNSPCQRCRKARVKC) is a DNA-binding region (zn(2)-C6 fungal-type). A compositionally biased stretch (basic and acidic residues) spans 73–82 (EELKNGENVH). Disordered regions lie at residues 73–130 (EELK…SMSG), 154–249 (DGST…VTSS), and 451–470 (GQGP…TTTN). 3 stretches are compositionally biased toward polar residues: residues 92–103 (SHRTASTPSNHA), 154–169 (DGST…TNGS), and 238–249 (LTQQHPAGVTSS). A compositionally biased stretch (low complexity) spans 458 to 470 (PSQGSSSRSTTTN).

The protein localises to the nucleus. In terms of biological role, transcription factor that specifically regulates the expression of the gene cluster that mediates the biosynthesis of the cytotoxic leucine-containing cytochalasans, including aspochalasin C, aspochalasin E, TMC-169, flavichalasine F, aspergillin PZ, aspochalasin M and flavichalasine G. In Aspergillus flavipes, this protein is Transcription factor ffsR.